Consider the following 388-residue polypeptide: Zinc finger C2H2 protein ECU10_0150 (388 aa).

The segment at 299 to 322 (YKCGFCGKAFESEKFIFNHFNNKH) adopts a C2H2-type zinc-finger fold.

This is Zinc finger C2H2 protein ECU10_0150 from Encephalitozoon cuniculi (strain GB-M1) (Microsporidian parasite).